The sequence spans 505 residues: Glutamate--tRNA ligase (505 aa).

The 'HIGH' region motif lies at P12 to T22. Positions K253–R257 match the 'KMSKS' region motif. Residue K256 coordinates ATP.

It belongs to the class-I aminoacyl-tRNA synthetase family. Glutamate--tRNA ligase type 1 subfamily. As to quaternary structure, monomer.

The protein resides in the cytoplasm. It catalyses the reaction tRNA(Glu) + L-glutamate + ATP = L-glutamyl-tRNA(Glu) + AMP + diphosphate. Functionally, catalyzes the attachment of glutamate to tRNA(Glu) in a two-step reaction: glutamate is first activated by ATP to form Glu-AMP and then transferred to the acceptor end of tRNA(Glu). This Chlamydia felis (strain Fe/C-56) (Chlamydophila felis) protein is Glutamate--tRNA ligase.